Consider the following 242-residue polypeptide: Large ribosomal subunit protein uL1 (242 aa).

This sequence belongs to the universal ribosomal protein uL1 family. Part of the 50S ribosomal subunit.

Binds directly to 23S rRNA. The L1 stalk is quite mobile in the ribosome, and is involved in E site tRNA release. Its function is as follows. Protein L1 is also a translational repressor protein, it controls the translation of the L11 operon by binding to its mRNA. This chain is Large ribosomal subunit protein uL1, found in Dictyoglomus thermophilum (strain ATCC 35947 / DSM 3960 / H-6-12).